The following is a 217-amino-acid chain: Probable transaldolase (217 aa).

Residue lysine 83 is the Schiff-base intermediate with substrate of the active site.

It belongs to the transaldolase family. Type 3B subfamily.

It localises to the cytoplasm. It catalyses the reaction D-sedoheptulose 7-phosphate + D-glyceraldehyde 3-phosphate = D-erythrose 4-phosphate + beta-D-fructose 6-phosphate. The protein operates within carbohydrate degradation; pentose phosphate pathway; D-glyceraldehyde 3-phosphate and beta-D-fructose 6-phosphate from D-ribose 5-phosphate and D-xylulose 5-phosphate (non-oxidative stage): step 2/3. Its function is as follows. Transaldolase is important for the balance of metabolites in the pentose-phosphate pathway. This Paracoccus denitrificans (strain Pd 1222) protein is Probable transaldolase.